A 443-amino-acid chain; its full sequence is MAGLVLSGCAIKPFSQSLPIPTKRFITNPSNINLLHPKDPIFSPNFHGFSRWAVKVSAPLRIPSIDQQDLDLDLERERISSLDVQEEEIFDAGAPPPFKLADIRAAIPKRCWVKDPWRSMSYVVRDVAIVLGLAAAAAHLNNWLVWPLYWAAQGTMFWALFVLGHDCGHGSFSNNAKLNSVVGHLLHSSILVPYHGWRISHRTHHQNHGHVENDESWHPLTEKTFKSLDWITRTLRFTLPFPMLAYPFYLWNRSPGKSGSHFDPSSDLFVPAEQKDVITSTICWTTMLALLFGLNFVVGPVQMLKLYGIPYLINVMWLDFVTYLHHHGHEDKLPWYRGKEWSYLRGGLTTIDRDYGWINNIHHDIGTHVIHHLFPQIPHYHLIEATEAAKPVLGKYYREPKKSSPIPFHLLGELVRSLKKDHYVSDTGDVLYYQTDDKLSKEK.

The N-terminal 51 residues, 1–51 (MAGLVLSGCAIKPFSQSLPIPTKRFITNPSNINLLHPKDPIFSPNFHGFSR), are a transit peptide targeting the chloroplast. The next 2 membrane-spanning stretches (helical) occupy residues 120-140 (MSYV…AAHL) and 143-163 (WLVW…LFVL). Positions 165-169 (HDCGH) match the Histidine box-1 motif. The short motif at 201–205 (HRTHH) is the Histidine box-2 element. The next 2 membrane-spanning stretches (helical) occupy residues 281–301 (TICW…VGPV) and 304–324 (LKLY…VTYL). The Histidine box-3 signature appears at 368 to 372 (HVIHH).

This sequence belongs to the fatty acid desaturase type 1 family. In terms of tissue distribution, highly expressed in leaves and cotyledons, while no or little expression detected in mature seeds, roots and stems.

It localises to the plastid. The protein resides in the chloroplast membrane. It carries out the reaction a (7Z,10Z)-hexadecadienoyl-containing glycerolipid + 2 reduced [2Fe-2S]-[ferredoxin] + O2 + 2 H(+) = a (7Z,10Z,13Z)-hexadecatrienoyl-containing glycerolipid + 2 oxidized [2Fe-2S]-[ferredoxin] + 2 H2O. The catalysed reaction is a (9Z,12Z)-octadecadienoyl-containing glycerolipid + 2 reduced [2Fe-2S]-[ferredoxin] + O2 + 2 H(+) = (9Z,12Z,15Z)-octadecatrienoyl-containing glycerolipid + 2 oxidized [2Fe-2S]-[ferredoxin] + 2 H2O. It functions in the pathway lipid metabolism; polyunsaturated fatty acid biosynthesis. Chloroplast omega-3 fatty acid desaturase introduces the third double bond in the biosynthesis of 18:3, and probably also 16:3 fatty acids, important constituents of plant membranes. It is thought to use ferredoxin as an electron donor and to act on fatty acids esterified to galactolipids, sulfolipids and phosphatidylglycerol. This is sn-2 acyl-lipid omega-3 desaturase (ferredoxin), chloroplastic from Helianthus annuus (Common sunflower).